A 357-amino-acid chain; its full sequence is DNA replication and repair protein RecF (357 aa).

Residue 30–37 (GANGSGKT) coordinates ATP.

Belongs to the RecF family.

The protein localises to the cytoplasm. The RecF protein is involved in DNA metabolism; it is required for DNA replication and normal SOS inducibility. RecF binds preferentially to single-stranded, linear DNA. It also seems to bind ATP. This is DNA replication and repair protein RecF from Shigella flexneri serotype 5b (strain 8401).